A 69-amino-acid chain; its full sequence is U2-agatoxin-Ao1g (69 aa).

Positions 1-20 (MKAIISLLLISAMVFSMIEA) are cleaved as a signal peptide. Positions 21 to 34 (VPVEEGLQLFEGER) are excised as a propeptide. Cystine bridges form between cysteine 36-cysteine 52, cysteine 43-cysteine 57, and cysteine 51-cysteine 67. Residue leucine 68 is modified to Leucine amide.

It belongs to the neurotoxin 01 (U2-agtx) family. In terms of tissue distribution, expressed by the venom gland.

The protein resides in the secreted. Functionally, insect active toxin causing rapid but reversible paralysis in crickets. No activity shown in mammals. Does not show effect on mammalian voltage-gated calcium channels. This Agelena orientalis (Funnel-web spider) protein is U2-agatoxin-Ao1g.